Consider the following 190-residue polypeptide: dCTP deaminase (190 aa).

DCTP contacts are provided by residues 111 to 116 (KSTYAR), 135 to 137 (TLE), Gln156, Tyr172, and Gln182. Catalysis depends on Glu137, which acts as the Proton donor/acceptor.

It belongs to the dCTP deaminase family. As to quaternary structure, homotrimer.

It carries out the reaction dCTP + H2O + H(+) = dUTP + NH4(+). Its pathway is pyrimidine metabolism; dUMP biosynthesis; dUMP from dCTP (dUTP route): step 1/2. In terms of biological role, catalyzes the deamination of dCTP to dUTP. The protein is dCTP deaminase of Stenotrophomonas maltophilia (strain K279a).